The primary structure comprises 144 residues: Small ribosomal subunit protein uS11c (144 aa).

It belongs to the universal ribosomal protein uS11 family. Part of the 30S ribosomal subunit.

The protein localises to the plastid. It localises to the chloroplast. In Oenothera biennis (German evening primrose), this protein is Small ribosomal subunit protein uS11c.